Reading from the N-terminus, the 504-residue chain is Glycerol kinase (504 aa).

Thr-14 contacts ADP. Residues Thr-14, Thr-15, and Ser-16 each contribute to the ATP site. Sn-glycerol 3-phosphate is bound at residue Thr-14. Residue Arg-18 participates in ADP binding. Residues Arg-84, Glu-85, Tyr-136, and Asp-246 each coordinate sn-glycerol 3-phosphate. Glycerol is bound by residues Arg-84, Glu-85, Tyr-136, Asp-246, and Gln-247. ADP is bound by residues Thr-268 and Gly-311. Residues Thr-268, Gly-311, Gln-315, and Gly-412 each contribute to the ATP site. Positions 412 and 416 each coordinate ADP.

The protein belongs to the FGGY kinase family.

The enzyme catalyses glycerol + ATP = sn-glycerol 3-phosphate + ADP + H(+). Its pathway is polyol metabolism; glycerol degradation via glycerol kinase pathway; sn-glycerol 3-phosphate from glycerol: step 1/1. Inhibited by fructose 1,6-bisphosphate (FBP). In terms of biological role, key enzyme in the regulation of glycerol uptake and metabolism. Catalyzes the phosphorylation of glycerol to yield sn-glycerol 3-phosphate. The protein is Glycerol kinase of Aliivibrio salmonicida (strain LFI1238) (Vibrio salmonicida (strain LFI1238)).